The sequence spans 226 residues: Cytidylate kinase (226 aa).

Position 12–20 (12–20 (GPSGAGKGT)) interacts with ATP.

The protein belongs to the cytidylate kinase family. Type 1 subfamily.

The protein resides in the cytoplasm. The catalysed reaction is CMP + ATP = CDP + ADP. The enzyme catalyses dCMP + ATP = dCDP + ADP. The chain is Cytidylate kinase from Xanthomonas campestris pv. campestris (strain 8004).